A 101-amino-acid polypeptide reads, in one-letter code: Small ribosomal subunit protein bS18c (101 aa).

The segment covering 1-19 has biased composition (basic residues); that stretch reads MDKSKRPFRKSKRSFRRRL. Disordered stretches follow at residues 1-23 and 82-101; these read MDKS…PPIG and KQFE…TRNK.

This sequence belongs to the bacterial ribosomal protein bS18 family. In terms of assembly, part of the 30S ribosomal subunit.

The protein localises to the plastid. It localises to the chloroplast. This chain is Small ribosomal subunit protein bS18c, found in Drimys granadensis.